Here is a 311-residue protein sequence, read N- to C-terminus: Malate dehydrogenase (311 aa).

NAD(+) contacts are provided by residues 7–13 (GAAGGIG) and Asp-34. Residues Arg-81 and Arg-87 each contribute to the substrate site. NAD(+) contacts are provided by residues Asn-94 and 117 to 119 (ITN). Substrate contacts are provided by Asn-119 and Arg-153. His-177 (proton acceptor) is an active-site residue. Met-227 contributes to the NAD(+) binding site.

Belongs to the LDH/MDH superfamily. MDH type 1 family. As to quaternary structure, homodimer.

It carries out the reaction (S)-malate + NAD(+) = oxaloacetate + NADH + H(+). In terms of biological role, catalyzes the reversible oxidation of malate to oxaloacetate. The polypeptide is Malate dehydrogenase (Shewanella woodyi (strain ATCC 51908 / MS32)).